A 247-amino-acid polypeptide reads, in one-letter code: Molybdate/tungstate transport system permease protein WtpB (247 aa).

Over 1–8 the chain is Cytoplasmic; sequence MRRDYTLY. A helical transmembrane segment spans residues 9-29; it reads LFAALGTFLIAYIAVPIAVIF. The Extracellular portion of the chain corresponds to 30-55; that stretch reads LKQASDVEMLVKTLHDPYVIEAIRNS. Positions 52–238 constitute an ABC transmembrane type-1 domain; the sequence is IRNSLLTATA…SLSLGIFVIL (187 aa). The helical transmembrane segment at 56 to 76 threads the bilayer; sequence LLTATATALIALLFGVPLGYV. The Cytoplasmic portion of the chain corresponds to 77 to 90; sequence LARKDFPGKSAVQA. The chain crosses the membrane as a helical span at residues 91–111; it reads LVDVPIVIPHSVVGIMLLVTF. The Extracellular portion of the chain corresponds to 112-114; it reads SNS. The helical transmembrane segment at 115 to 135 threads the bilayer; that stretch reads ILDSYKGIVAAMLFVSAPFTI. The Cytoplasmic portion of the chain corresponds to 136–163; the sequence is NAARDGFLAVDEKLEAVARTLGASRWRA. The chain crosses the membrane as a helical span at residues 164-184; it reads FLSISLPMAFPSIASGAIMTW. The Extracellular portion of the chain corresponds to 185–222; that stretch reads ARAISEVGAILIVAYYPKTAQVLILEYFNNYGLRASRP. Residues 223 to 243 form a helical membrane-spanning segment; the sequence is IAVIMVSLSLGIFVILRWLVG. Residues 244 to 247 are Cytoplasmic-facing; the sequence is RKNA.

Belongs to the binding-protein-dependent transport system permease family. As to quaternary structure, the complex is composed of two ATP-binding proteins (WtpC), two transmembrane proteins (WtpB) and a solute-binding protein (WtpA).

Its subcellular location is the cell membrane. Part of the ABC transporter complex WtpABC involved in molybdate/tungstate import. Probably responsible for the translocation of the substrate across the membrane. The chain is Molybdate/tungstate transport system permease protein WtpB (wtpB) from Thermococcus kodakarensis (strain ATCC BAA-918 / JCM 12380 / KOD1) (Pyrococcus kodakaraensis (strain KOD1)).